A 123-amino-acid chain; its full sequence is Large ribosomal subunit protein uL29 (123 aa).

N6-acetyllysine is present on Lys-19. Lys-25 is covalently cross-linked (Glycyl lysine isopeptide (Lys-Gly) (interchain with G-Cter in SUMO2)). Phosphoserine is present on Ser-29. Lys-43 carries the post-translational modification N6-acetyllysine. A disordered region spans residues 100–123 (EKLKTKKQQRKERLYPLRKYAVKA).

It belongs to the universal ribosomal protein uL29 family. Component of the large ribosomal subunit.

It is found in the cytoplasm. Its function is as follows. Component of the large ribosomal subunit. The ribosome is a large ribonucleoprotein complex responsible for the synthesis of proteins in the cell. The protein is Large ribosomal subunit protein uL29 (Rpl35) of Mus musculus (Mouse).